Consider the following 381-residue polypeptide: Pentraxin-related protein PTX3 (381 aa).

The first 17 residues, Met1–Ala17, serve as a signal peptide directing secretion. Coiled coils occupy residues Leu74–Arg101 and Glu143–Gln167. 2 disulfide bridges follow: Cys179–Cys357 and Cys210–Cys271. Positions Cys179 to Ser381 constitute a Pentraxin (PTX) domain. Asn220 carries N-linked (GlcNAc...) asparagine glycosylation.

As to quaternary structure, homooctamer; disulfide-linked. Binds to C1q. In terms of assembly, (Microbial infection) Interacts with SARS coronavirus-2/SARS-CoV-2 Nucleoprotein and Spike protein homotrimer. Post-translationally, glycosylated.

It localises to the secreted. Functionally, plays a role in the regulation of innate resistance to pathogens, inflammatory reactions, possibly clearance of self-components and female fertility. The sequence is that of Pentraxin-related protein PTX3 from Homo sapiens (Human).